A 304-amino-acid chain; its full sequence is Proline dehydrogenase 2 (304 aa).

Lys97 serves as a coordination point for substrate. The active site involves Asp131. FAD contacts are provided by Met132 and Gln160. Arg181 is a catalytic residue. Residues 184–186 (KGA) and 223–224 (TH) contribute to the FAD site. 285–286 (RR) lines the substrate pocket.

The protein belongs to the proline dehydrogenase family. It depends on FAD as a cofactor.

It carries out the reaction L-proline + a quinone = (S)-1-pyrroline-5-carboxylate + a quinol + H(+). It participates in amino-acid degradation; L-proline degradation into L-glutamate; L-glutamate from L-proline: step 1/2. In terms of biological role, converts proline to delta-1-pyrroline-5-carboxylate. The protein is Proline dehydrogenase 2 of Bacillus subtilis subsp. natto.